Here is a 303-residue protein sequence, read N- to C-terminus: MNILNKAIVIAGPTGVGKTKISIDLAKKLNAEIISSDSAQVYRGLNIGTAKIREEEKEGIKHHLIDIVEPVLKYSVGNFEKDVNKILNQNSEKNFLLVGGTGLYLNSVTNGLSILPEADKKTREYLTTLNNQALLELALKYDEEATKEIHPNNRVRLERVVEVFLLTGQKFSELSKKNIKNNNFKFLKIALERNRENLYDRINKRVDIMFAQGLVDEVKNLYKIYGDKLYSLNIIGYNEIIDYINAKISLDEAVYQIKLNSRHYAKRQFTWFKADKEYQWFNLDGISEQEIVKTIYTLFNIKA.

12–19 (GPTGVGKT) lines the ATP pocket. 14-19 (TGVGKT) provides a ligand contact to substrate. The interaction with substrate tRNA stretch occupies residues 37–40 (DSAQ).

This sequence belongs to the IPP transferase family. Monomer. It depends on Mg(2+) as a cofactor.

The enzyme catalyses adenosine(37) in tRNA + dimethylallyl diphosphate = N(6)-dimethylallyladenosine(37) in tRNA + diphosphate. Its function is as follows. Catalyzes the transfer of a dimethylallyl group onto the adenine at position 37 in tRNAs that read codons beginning with uridine, leading to the formation of N6-(dimethylallyl)adenosine (i(6)A). This chain is tRNA dimethylallyltransferase, found in Fusobacterium nucleatum subsp. nucleatum (strain ATCC 25586 / DSM 15643 / BCRC 10681 / CIP 101130 / JCM 8532 / KCTC 2640 / LMG 13131 / VPI 4355).